Reading from the N-terminus, the 604-residue chain is Protein TAX4 (604 aa).

Disordered stretches follow at residues 38-77, 133-249, 267-300, 338-380, and 394-428; these read HPNGNAGSAERPRHLKVESAPVVKSEPSLPRMRQPEPRSI, FSNR…RQQE, GTLPDLIPRSQRKTSKPRFKHKLLRSPEQQQENL, DETF…KGLK, and PFPHHHHHHHQLHNPNSHHLHTHHHTSSHKFNEDK. The segment covering 176 to 185 has biased composition (polar residues); that stretch reads YDNNVRSRSI. Composition is skewed to low complexity over residues 186-203 and 224-240; these read SPQVSYSTSLSSSCSISS and SMSSYSLASKASAKASL. Composition is skewed to basic residues over residues 276–290, 366–379, and 396–421; these read SQRKTSKPRFKHKLL, KKKKSRRSKIKKGL, and PHHHHHHHQLHNPNSHHLHTHHHTSS. The region spanning 469 to 559 is the EH domain; it reads ANEDDESHLQ…RVWNSVDGYV (91 aa).

Belongs to the IRS4 family. As to quaternary structure, interacts with INP51.

With IRS4, acts as a positive regulator of INP51 activity and phosphatidylinositol 4,5-bisphosphate turnover. Negatively regulates signaling through the cell integrity pathway, including the MAP kinase SLT2. The protein is Protein TAX4 (TAX4) of Saccharomyces cerevisiae (strain YJM789) (Baker's yeast).